We begin with the raw amino-acid sequence, 286 residues long: CCR4-NOT transcription complex subunit 7 (286 aa).

Asp40, Glu42, Asp161, Asp230, and Glu278 together coordinate a divalent metal cation.

The protein belongs to the CAF1 family. As to quaternary structure, component of the CCR4-NOT complex. The cofactor is Mn(2+). It depends on Mg(2+) as a cofactor. Co(2+) serves as cofactor.

Its subcellular location is the nucleus. It localises to the cytoplasm. It carries out the reaction Exonucleolytic cleavage of poly(A) to 5'-AMP.. In terms of biological role, has 3'-5' poly(A) exoribonuclease activity for synthetic poly(A) RNA substrate. Catalytic component of the CCR4-NOT complex which is one of the major cellular mRNA deadenylases and is linked to various cellular processes including bulk mRNA degradation, miRNA-mediated repression, translational repression during translational initiation and general transcription regulation. During miRNA-mediated repression the complex also seems to act as translational repressor during translational initiation. Additional complex functions may be a consequence of its influence on mRNA expression. The sequence is that of CCR4-NOT transcription complex subunit 7 (cnot7) from Danio rerio (Zebrafish).